We begin with the raw amino-acid sequence, 446 residues long: Chromosomal replication initiator protein DnaA (446 aa).

The domain I, interacts with DnaA modulators stretch occupies residues 1-92 (MENISDLWNS…SQAEEEIDLP (92 aa)). The tract at residues 93-109 (PSKPNAAQDDSNHLPQS) is domain II. The segment at 110–326 (MLNPKYTFDT…GALIRVVAYS (217 aa)) is domain III, AAA+ region. The ATP site is built by G154, G156, K157, and T158. The domain IV, binds dsDNA stretch occupies residues 327-446 (SLINKDINAD…QVEEINDILK (120 aa)).

It belongs to the DnaA family. Oligomerizes as a right-handed, spiral filament on DNA at oriC.

It is found in the cytoplasm. Its function is as follows. Plays an essential role in the initiation and regulation of chromosomal replication. ATP-DnaA binds to the origin of replication (oriC) to initiate formation of the DNA replication initiation complex once per cell cycle. Binds the DnaA box (a 9 base pair repeat at the origin) and separates the double-stranded (ds)DNA. Forms a right-handed helical filament on oriC DNA; dsDNA binds to the exterior of the filament while single-stranded (ss)DNA is stabiized in the filament's interior. The ATP-DnaA-oriC complex binds and stabilizes one strand of the AT-rich DNA unwinding element (DUE), permitting loading of DNA polymerase. After initiation quickly degrades to an ADP-DnaA complex that is not apt for DNA replication. Binds acidic phospholipids. The polypeptide is Chromosomal replication initiator protein DnaA (Bacillus cereus (strain 03BB102)).